The sequence spans 184 residues: Large ribosomal subunit protein uL5 (184 aa).

The protein belongs to the universal ribosomal protein uL5 family. In terms of assembly, component of the large ribosomal subunit. Interacts with Fmr1 to form the RNA-induced silencing complex (RISC), a ribonucleoprotein (RNP) complex involved in translation regulation, other components of the complex are RpL5, Rm62, AGO2 and Dcr-1.

The protein localises to the nucleus. The protein resides in the cytoplasm. Component of the ribosome, a large ribonucleoprotein complex responsible for the synthesis of proteins in the cell. The small ribosomal subunit (SSU) binds messenger RNAs (mRNAs) and translates the encoded message by selecting cognate aminoacyl-transfer RNA (tRNA) molecules. The large subunit (LSU) contains the ribosomal catalytic site termed the peptidyl transferase center (PTC), which catalyzes the formation of peptide bonds, thereby polymerizing the amino acids delivered by tRNAs into a polypeptide chain. The nascent polypeptides leave the ribosome through a tunnel in the LSU and interact with protein factors that function in enzymatic processing, targeting, and the membrane insertion of nascent chains at the exit of the ribosomal tunnel. The protein is Large ribosomal subunit protein uL5 (RpL11) of Drosophila melanogaster (Fruit fly).